Consider the following 1093-residue polypeptide: Carbamoyl phosphate synthase large chain (1093 aa).

Residues 1 to 412 (MPRRNDIRKI…SLMKALRSLE (412 aa)) form a carboxyphosphate synthetic domain region. ATP-binding residues include arginine 139, arginine 179, glycine 185, glycine 186, glutamate 218, valine 220, glutamate 225, glycine 251, valine 252, histidine 253, glutamine 295, and glutamate 309. Residues 143–338 (KDAMTRIGLD…IAKIAAKLAV (196 aa)) enclose the ATP-grasp 1 domain. Mg(2+) contacts are provided by glutamine 295, glutamate 309, and asparagine 311. Mn(2+) contacts are provided by glutamine 295, glutamate 309, and asparagine 311. The segment at 413–560 (TGKRVGAEVL…YSSYEEEDEA (148 aa)) is oligomerization domain. The tract at residues 561–952 (PQTDKRKVII…AFAKAQLSAG (392 aa)) is carbamoyl phosphate synthetic domain. Residues 689-880 (GKLLEQLQIP…LAKIASRLMT (192 aa)) enclose the ATP-grasp 2 domain. Residues arginine 725, histidine 764, leucine 766, glutamate 771, glycine 796, isoleucine 797, histidine 798, serine 799, glutamine 839, and glutamate 851 each coordinate ATP. Glutamine 839, glutamate 851, and asparagine 853 together coordinate Mg(2+). Mn(2+) is bound by residues glutamine 839, glutamate 851, and asparagine 853. An MGS-like domain is found at 953–1093 (LILPSSGTVF…QLLHAGHAVK (141 aa)). The allosteric domain stretch occupies residues 953–1093 (LILPSSGTVF…QLLHAGHAVK (141 aa)).

Belongs to the CarB family. Composed of two chains; the small (or glutamine) chain promotes the hydrolysis of glutamine to ammonia, which is used by the large (or ammonia) chain to synthesize carbamoyl phosphate. Tetramer of heterodimers (alpha,beta)4. It depends on Mg(2+) as a cofactor. Requires Mn(2+) as cofactor.

The enzyme catalyses hydrogencarbonate + L-glutamine + 2 ATP + H2O = carbamoyl phosphate + L-glutamate + 2 ADP + phosphate + 2 H(+). The catalysed reaction is hydrogencarbonate + NH4(+) + 2 ATP = carbamoyl phosphate + 2 ADP + phosphate + 2 H(+). Its pathway is amino-acid biosynthesis; L-arginine biosynthesis; carbamoyl phosphate from bicarbonate: step 1/1. It participates in pyrimidine metabolism; UMP biosynthesis via de novo pathway; (S)-dihydroorotate from bicarbonate: step 1/3. In terms of biological role, large subunit of the glutamine-dependent carbamoyl phosphate synthetase (CPSase). CPSase catalyzes the formation of carbamoyl phosphate from the ammonia moiety of glutamine, carbonate, and phosphate donated by ATP, constituting the first step of 2 biosynthetic pathways, one leading to arginine and/or urea and the other to pyrimidine nucleotides. The large subunit (synthetase) binds the substrates ammonia (free or transferred from glutamine from the small subunit), hydrogencarbonate and ATP and carries out an ATP-coupled ligase reaction, activating hydrogencarbonate by forming carboxy phosphate which reacts with ammonia to form carbamoyl phosphate. This is Carbamoyl phosphate synthase large chain from Acidobacterium capsulatum (strain ATCC 51196 / DSM 11244 / BCRC 80197 / JCM 7670 / NBRC 15755 / NCIMB 13165 / 161).